The primary structure comprises 305 residues: MADVSVDQSKLPGVKEVCRDFAVLEDHTLAHSLQEQEIEHHLASNIQRNRLVQHDLQVAKQLQEEDLKAQAQLQKRYKALEQHDCEIAQEIQEKLTIEAERRRIQEKKDEDIARLLQEKELQEEKRRKKHTPEFSGGSVFGDNYYHEDGGMKPRGIKEAVSTPARASHRDQEWYDAEIARKLQEEELLATHVDMRAAQVAQDEEIARLLMAEEKKAYKKAKEREKSSLDKRKHDPECKLKAKSAHSKSKEGDEAHRSKIDRPSRPPPPTMMGLEDTDPTHFTNQHSTTWHLPKSESSQKGFHNKQ.

Ala-2 carries the post-translational modification N-acetylalanine. Ser-5 bears the Phosphoserine mark. Residues 86–130 (EIAQEIQEKLTIEAERRRIQEKKDEDIARLLQEKELQEEKRRKKH) are a coiled coil. 2 disordered regions span residues 122 to 142 (QEEKRRKKHTPEFSGGSVFGD) and 218 to 305 (KKAK…HNKQ). Composition is skewed to basic and acidic residues over residues 218–239 (KKAKEREKSSLDKRKHDPECKL) and 247–263 (KSKEGDEAHRSKIDRPS). Polar residues predominate over residues 279–305 (THFTNQHSTTWHLPKSESSQKGFHNKQ).

In terms of assembly, interacts with RNF126. Post-translationally, phosphorylated on tyrosine residues. In terms of tissue distribution, widely expressed.

The protein localises to the cytoplasm. Its function is as follows. Involved in EGFR signaling. This is Coiled-coil domain-containing protein 50 (Ccdc50) from Mus musculus (Mouse).